Here is a 378-residue protein sequence, read N- to C-terminus: Putative glutamate--cysteine ligase 2 (378 aa).

The protein belongs to the glutamate--cysteine ligase type 2 family. YbdK subfamily.

It carries out the reaction L-cysteine + L-glutamate + ATP = gamma-L-glutamyl-L-cysteine + ADP + phosphate + H(+). In terms of biological role, ATP-dependent carboxylate-amine ligase which exhibits weak glutamate--cysteine ligase activity. The protein is Putative glutamate--cysteine ligase 2 of Salinispora tropica (strain ATCC BAA-916 / DSM 44818 / JCM 13857 / NBRC 105044 / CNB-440).